A 1155-amino-acid polypeptide reads, in one-letter code: Probable translation initiation factor IF-2 (1155 aa).

The DOD-type homing endonuclease domain occupies 237–367; it reads FAGVMFGDGC…LSILLLRFEI (131 aa). Residues 561–781 form the tr-type G domain; the sequence is TTETHNFIAN…VAGLAQKFLE (221 aa). GTP contacts are provided by residues 634-638 and 688-691; these read DTPGH and NKID.

It belongs to the TRAFAC class translation factor GTPase superfamily. Classic translation factor GTPase family. IF-2 subfamily. In terms of processing, this protein undergoes a protein self splicing that involves a post-translational excision of the intervening region (intein) followed by peptide ligation.

Function in general translation initiation by promoting the binding of the formylmethionine-tRNA to ribosomes. Seems to function along with eIF-2. In Methanocaldococcus jannaschii (strain ATCC 43067 / DSM 2661 / JAL-1 / JCM 10045 / NBRC 100440) (Methanococcus jannaschii), this protein is Probable translation initiation factor IF-2 (infB).